A 254-amino-acid chain; its full sequence is Cell wall biogenesis protein NCW2 (254 aa).

The first 17 residues, 1 to 17 (MKACSILFTTLITLAAA), serve as a signal peptide directing secretion. Disordered regions lie at residues 19–57 (KDSG…SAST), 111–143 (TSTA…DGPV), and 167–191 (ATTD…SSTK). A compositionally biased stretch (low complexity) spans 27–42 (QNSEDSSQKESSNSQE). The span at 43 to 57 (ITPTTTKEAQESAST) shows a compositional bias: polar residues. The span at 111–139 (TSTASVQPTGETSSGITNSASSSTTSTST) shows a compositional bias: low complexity. N-linked (GlcNAc...) asparagine glycosylation occurs at N229. The GPI-anchor amidated asparagine moiety is linked to residue N232. A propeptide spans 233-254 (GAFAGTHIAYGAGAFAVGALLL) (removed in mature form).

It is found in the cell membrane. Its function is as follows. Cell wall biogenesis protein that participates in the organization of the beta-glucan assembly. Involved in the mechanism responsible for cell tolerance to polyhexamethylene biguanide (PHMB), an antifungal agent. In Saccharomyces cerevisiae (strain ATCC 204508 / S288c) (Baker's yeast), this protein is Cell wall biogenesis protein NCW2.